Here is a 263-residue protein sequence, read N- to C-terminus: Protein M1425_2021 (263 aa).

It belongs to the CinA family.

The protein is Protein M1425_2021 of Saccharolobus islandicus (strain M.14.25 / Kamchatka #1) (Sulfolobus islandicus).